Here is a 265-residue protein sequence, read N- to C-terminus: Ribosomal RNA large subunit methyltransferase E (265 aa).

5 residues coordinate S-adenosyl-L-methionine: glycine 83, tryptophan 85, aspartate 106, aspartate 122, and aspartate 146. Catalysis depends on lysine 186, which acts as the Proton acceptor. Residues 230-265 (KGREAGPPSGGSERPVDVSKDLSARSDSEGPGDAEG) are disordered. Residues 243 to 257 (RPVDVSKDLSARSDS) are compositionally biased toward basic and acidic residues.

Belongs to the class I-like SAM-binding methyltransferase superfamily. RNA methyltransferase RlmE family.

Its subcellular location is the cytoplasm. The catalysed reaction is uridine(2552) in 23S rRNA + S-adenosyl-L-methionine = 2'-O-methyluridine(2552) in 23S rRNA + S-adenosyl-L-homocysteine + H(+). Specifically methylates the uridine in position 2552 of 23S rRNA at the 2'-O position of the ribose in the fully assembled 50S ribosomal subunit. The polypeptide is Ribosomal RNA large subunit methyltransferase E (Mesorhizobium japonicum (strain LMG 29417 / CECT 9101 / MAFF 303099) (Mesorhizobium loti (strain MAFF 303099))).